The primary structure comprises 341 residues: Putative ankyrin repeat protein FPV031 (341 aa).

ANK repeat units follow at residues 23-55 (DRNS…FQET), 58-87 (DNLT…IINQ), 92-124 (CGNT…ITNN), 125-158 (DGFT…IRDN), and 163-195 (TGLT…YSTC).

The polypeptide is Putative ankyrin repeat protein FPV031 (ANK3) (Fowlpox virus (strain NVSL) (FPV)).